A 479-amino-acid polypeptide reads, in one-letter code: ATP-dependent RNA helicase DDX19B (479 aa).

At Ala-2 the chain carries N-acetylalanine. Positions 2–300 (ATDSWALAVD…DPNVIKLKRE (299 aa)) are N-terminal lobe. Residues 34–54 (TNGAVVKTNANAEKTDEEEKE) form a disordered region. Residues 55–68 (DRAAQSLLNKLIRS) form an N-terminal helix region. Residues 92–120 (KSFEELRLKPQLLQGVYAMGFNRPSKIQE) carry the Q motif motif. ATP is bound by residues Gln-119 and 138–145 (SQSGTGKT). The Helicase ATP-binding domain maps to 125–295 (LMLAEPPQNL…QKVVPDPNVI (171 aa)). A DEAD box motif is present at residues 242–245 (DEAD). The tract at residues 301–479 (EETLDTIKQY…DLDEIEKIAN (179 aa)) is C-terminal lobe. A Helicase C-terminal domain is found at 306–474 (TIKQYYVLCS…RLDTDDLDEI (169 aa)). The ATP site is built by Arg-429 and Arg-432.

This sequence belongs to the DEAD box helicase family. DDX19/DBP5 subfamily. In terms of assembly, associates with the nuclear pore complex via interaction with NUP214. Interacts with NUP214 or RNA in a mutually exclusive manner.

It localises to the cytoplasm. The protein resides in the nucleus. It is found in the nucleoplasm. It carries out the reaction ATP + H2O = ADP + phosphate + H(+). Functionally, ATP-dependent RNA helicase involved in mRNA export from the nucleus. Rather than unwinding RNA duplexes, DDX19B functions as a remodeler of ribonucleoprotein particles, whereby proteins bound to nuclear mRNA are dissociated and replaced by cytoplasmic mRNA binding proteins. This is ATP-dependent RNA helicase DDX19B (DDX19B) from Homo sapiens (Human).